Here is a 1720-residue protein sequence, read N- to C-terminus: Merozoite surface protein 1 (1720 aa).

The N-terminal stretch at 1–19 is a signal peptide; that stretch reads MKIIFFLCSFLFFIINTQC. Residues 63–112 are compositionally biased toward low complexity; the sequence is ASAQSGASAQSGASAQSGASAQSGASAQSGASAQSGTSGPSGPSGTSPSS. The interval 63–137 is disordered; that stretch reads ASAQSGASAQ…PPADASDSDA (75 aa). The span at 113–122 shows a compositional bias: polar residues; that stretch reads RSNTLPRSNT. Over residues 123–132 the composition is skewed to low complexity; sequence SSGASPPADA. A coiled-coil region spans residues 474-519; it reads INNIKKKIDLEEKNINHTKEQNKKLLEDYEKSKKDYEELLEKFYEM. 4 disordered regions span residues 723 to 775, 908 to 955, 1249 to 1278, and 1470 to 1491; these read SETT…PPKE, TGTS…SGPA, TPPQPDVTPSPLSVRVSGSSGSTKEETQIP, and KEKFPSSPPTTPPSPAKTDEQK. A compositionally biased stretch (acidic residues) spans 743-753; it reads EVTEETEETEE. Over residues 908 to 946 the composition is skewed to low complexity; it reads TGTSSTSSPGNTTVNTAQSATHSNSQNQQSNASSTNTQN. Residues 1264–1278 show a composition bias toward polar residues; the sequence is VSGSSGSTKEETQIP. Over residues 1475–1484 the composition is skewed to pro residues; that stretch reads SSPPTTPPSP. 2 consecutive EGF-like domains span residues 1611–1651 and 1652–1693; these read HQCV…VENP and NPTC…YPLF. 6 disulfides stabilise this stretch: C1613–C1624, C1618–C1634, C1636–C1647, C1655–C1668, C1662–C1682, and C1684–C1698. S1699 carries GPI-anchor amidated serine lipidation. Positions 1700–1720 are cleaved as a propeptide — removed in mature form; sequence SSNFLGISFLLILMLILYSFI.

In terms of assembly, forms a complex composed of subunits p83, p30, p38, and p42 which remain non-covalently associated; the complex is formed at the merozoite surface prior to egress from host erythrocytes. Forms a complex composed of processed MSP1 subunits, MSP6 subunit p36 and MSP7; the complex is formed at the merozoite surface prior to egress from host erythrocytes. Within the complex, interacts (via subunit p38) with MSP6 subunit p36 and (via subunits p83, p30 and p38) with MSP7 (via subunit p22). Forms a complex composed of MSP1, MSP6, DBLMSP1 and DBLMSP2. Within the complex, interacts (via subunit p38) with DBLMSP1 and DBLMSP2. Forms a complex composed of MSP1, and rhoptry proteins RhopH3, RAP1 and CLAG9/RhopH3. Within the complex, interacts (via subunits p42 and p19) with RhopH3 (via C-terminus). Forms a complex composed of MSP1, MSP6, MSP7, MSP9 and MSP3; within the complex, MSP6 and MSP9 mediate the binding to the host erythrocyte. Interacts (via subunits p19 and p42) with MSP9; the interaction is direct; MSP1 subunits p19 or p42, and MSP9 form a co-ligand complex that interacts with host SLC4A1/Band 3 protein. May interact with PFD6. Interacts with host spectrin. Interacts with host glycophorin GYPA in a sialic acid-independent manner. As to quaternary structure, interacts with host proinflammatory cytokine S100P; the interaction blocks S100P inflammatory and chemotactic activities. In terms of assembly, interacts with host SLC4A1/Band 3 (via 5ABC region) on the host erythrocyte surface in a sialic acid-independent manner. In terms of processing, the p190 precursor is cleaved by SUB1 prior to merozoite egress into 4 subunits p83, p30, p38, and p42 which remain non-covalently associated. SUB1-mediated proteolytic cleavage occurs in an orderly manner; the first cleavage occurs at the p30/p38 site, followed by cleavage at the p83/p30 site, in the 3D7 strain a second cleavage occurs at the N-terminus of p83, the last cleavage occurs at the p38/p42 site. The order of cleavage is essential for parasite viability. SUB1-mediated processing is essential for merozoite egress. In a second processing step during erythrocyte invasion, p42 is cleaved by SUB2 into p33 and p19; the latter remains attached to the merozoite surface via its GPI-anchor and is endocytosed during the subsequent ring stage.

It is found in the cell membrane. The protein localises to the secreted. The protein resides in the vacuole membrane. During the asexual blood stage, involved in merozoite egress from host erythrocytes possibly via its interaction with the host cytoskeleton protein spectrin resulting in the destabilization of the host cytoskeleton and thus leading to erythrocyte cell membrane rupture. Involved in the binding to host erythrocytes and is required for host erythrocyte invasion. Its function is as follows. By binding to host proinflammatory cytokine S100P may interfere with host immune responses. In terms of biological role, involved in merozoite invasion of host erythrocytes. May play a role in the biogenesis and/or function of the food vacuole during the intraerythrocytic development. This chain is Merozoite surface protein 1, found in Plasmodium falciparum (isolate 3D7).